The primary structure comprises 705 residues: uncharacterized protein (705 aa).

Residues Ser-554 and His-676 each act as charge relay system in the active site.

The protein belongs to the peptidase S9A family.

This is an uncharacterized protein from Sinorhizobium fredii (strain NBRC 101917 / NGR234).